The following is a 263-amino-acid chain: MMRLEKVFYLTNPTTKDLENFIDMYVFKYILILLARCKVFYEGRAKSQLEEGDRVIIIKPDGAFLIHKDKKREPVNWQPSGSSIIWEVEDNFFILKSIRRKPKEELKVVISEVYHACAFNCEDYEEINLRGSESEMAEMIFRNPDLIEEGFKPISREYQIPTGIVDILGKDKENKWVILELKRRRADLQAVSQLKRYVEYFKNKYGEDKVRGILVSPSLTTGAEKLLKEENLEFKRLNPPKGSKRDLKHNIKTKKTTVLDEWL.

Belongs to the NucS endonuclease family.

It is found in the cytoplasm. In terms of biological role, cleaves both 3' and 5' ssDNA extremities of branched DNA structures. This Methanocaldococcus jannaschii (strain ATCC 43067 / DSM 2661 / JAL-1 / JCM 10045 / NBRC 100440) (Methanococcus jannaschii) protein is Endonuclease NucS.